We begin with the raw amino-acid sequence, 314 residues long: MGLRVVFMGTPEFAVPSLRRIAAMKPQFETVLVVTGCDKPRRSKNSPPEPTPVKQAALELGLPVLEADDVSSHEFALQVAAARPDVIVVAAFRVLPPEVLELPPLGTFNLHGSLLPAYRGAAPVNWAIINGDAETGVTTFFLQKSVDTGNIITMDRTPIGPDENAFELLKRLSEIGAGTVERTLTMIADGAVMPEKQDERFATKAPKLNRENTRIDWNQPVQRLHDFIRGLALKPAAWTTFGGKSLKIYKAKACAIETAPDEPGTLRIADGRLLVAGTDGWIELLSVQAEGKKAMDGELFARGLRARKEMLRFL.

113–116 (SLLP) serves as a coordination point for (6S)-5,6,7,8-tetrahydrofolate.

Belongs to the Fmt family.

It carries out the reaction L-methionyl-tRNA(fMet) + (6R)-10-formyltetrahydrofolate = N-formyl-L-methionyl-tRNA(fMet) + (6S)-5,6,7,8-tetrahydrofolate + H(+). Its function is as follows. Attaches a formyl group to the free amino group of methionyl-tRNA(fMet). The formyl group appears to play a dual role in the initiator identity of N-formylmethionyl-tRNA by promoting its recognition by IF2 and preventing the misappropriation of this tRNA by the elongation apparatus. This is Methionyl-tRNA formyltransferase from Chlorobaculum tepidum (strain ATCC 49652 / DSM 12025 / NBRC 103806 / TLS) (Chlorobium tepidum).